The following is a 344-amino-acid chain: Nicotinate-nucleotide--dimethylbenzimidazole phosphoribosyltransferase (344 aa).

Catalysis depends on glutamate 310, which acts as the Proton acceptor.

It belongs to the CobT family.

It carries out the reaction 5,6-dimethylbenzimidazole + nicotinate beta-D-ribonucleotide = alpha-ribazole 5'-phosphate + nicotinate + H(+). The protein operates within nucleoside biosynthesis; alpha-ribazole biosynthesis; alpha-ribazole from 5,6-dimethylbenzimidazole: step 1/2. Functionally, catalyzes the synthesis of alpha-ribazole-5'-phosphate from nicotinate mononucleotide (NAMN) and 5,6-dimethylbenzimidazole (DMB). The polypeptide is Nicotinate-nucleotide--dimethylbenzimidazole phosphoribosyltransferase (Shewanella amazonensis (strain ATCC BAA-1098 / SB2B)).